Here is a 342-residue protein sequence, read N- to C-terminus: MTTLTITRPDDWHVHLRDGDVLADTVRDISRYNGRALIMPNTVPPVTTTEMALAYRERIMAAQPQAHFEPLMALYLTDNTSPEEIRKAKASGKVVAAKLYPAGATTNSDSGVTSAKNIYPVLQAMQEVGMLLLVHGEVTTHEVDIFDREKTFLDTVLAPIVNDFPQLKIVLEHITTADAVTFVQQAGDNVAATITAHHLLFNRNHMLVGGIRPHFYCLPILKRATHQHALVAAATSGSKKFFLGTDSAPHAKGRKEAACGCAGSYTAHAALELYAEVFEKEGKLENLEAFASFNGPDFYGLPRNQETVTLTKQAWPVAESMPFGSDIVVPIRAGENIEWTVK.

Residues histidine 13 and histidine 15 each coordinate Zn(2+). Substrate contacts are provided by residues 15 to 17 (HLR) and asparagine 41. Lysine 98, histidine 135, and histidine 173 together coordinate Zn(2+). Residue lysine 98 is modified to N6-carboxylysine. Residue histidine 135 coordinates substrate. Leucine 218 serves as a coordination point for substrate. Aspartate 246 contacts Zn(2+). The active site involves aspartate 246. Substrate is bound by residues histidine 250 and alanine 262.

The protein belongs to the metallo-dependent hydrolases superfamily. DHOase family. Class II DHOase subfamily. In terms of assembly, homodimer. It depends on Zn(2+) as a cofactor.

The catalysed reaction is (S)-dihydroorotate + H2O = N-carbamoyl-L-aspartate + H(+). It functions in the pathway pyrimidine metabolism; UMP biosynthesis via de novo pathway; (S)-dihydroorotate from bicarbonate: step 3/3. In terms of biological role, catalyzes the reversible cyclization of carbamoyl aspartate to dihydroorotate. The chain is Dihydroorotase from Vibrio cholerae serotype O1 (strain ATCC 39315 / El Tor Inaba N16961).